We begin with the raw amino-acid sequence, 214 residues long: Ras-related protein RABA5c (214 aa).

A GTP-binding site is contributed by 19–26 (GDSAVGKS). The Effector region motif lies at 41 to 49 (SKATIGVEF). Residues 67-71 (DTAGQ), 125-128 (NKCD), and 155-156 (SA) contribute to the GTP site. Residues cysteine 211 and cysteine 212 are each lipidated (S-geranylgeranyl cysteine).

The protein belongs to the small GTPase superfamily. Rab family. In terms of assembly, interacts (via C-terminus) with GDI1. Interacts with PUX8/SAY1. Expressed in roots and actively dividing cells.

The protein localises to the golgi apparatus membrane. It localises to the golgi apparatus. The protein resides in the trans-Golgi network membrane. Its subcellular location is the cell membrane. In terms of biological role, intracellular vesicle trafficking and protein transport. Binds GTP and GDP and possesses intrinsic GTPase activity. This Arabidopsis thaliana (Mouse-ear cress) protein is Ras-related protein RABA5c (RABA5C).